Consider the following 217-residue polypeptide: 8-oxoguanine DNA glycosylase/AP lyase (217 aa).

Residues K138 and D157 contribute to the active site.

It belongs to the type-2 OGG1 family.

The catalysed reaction is 2'-deoxyribonucleotide-(2'-deoxyribose 5'-phosphate)-2'-deoxyribonucleotide-DNA = a 3'-end 2'-deoxyribonucleotide-(2,3-dehydro-2,3-deoxyribose 5'-phosphate)-DNA + a 5'-end 5'-phospho-2'-deoxyribonucleoside-DNA + H(+). Catalyzes the excision of an oxidatively damaged form of guanine (7,8-dihydro-8-oxoguanine = 8-oxoG) from DNA. Also cleaves the DNA backbone at apurinic/apyrimidinic sites (AP sites). The polypeptide is 8-oxoguanine DNA glycosylase/AP lyase (Fusobacterium nucleatum subsp. nucleatum (strain ATCC 25586 / DSM 15643 / BCRC 10681 / CIP 101130 / JCM 8532 / KCTC 2640 / LMG 13131 / VPI 4355)).